The primary structure comprises 1156 residues: Reverse gyrase 1 (1156 aa).

The RG N-terminal-type zinc-finger motif lies at 1–38; the sequence is MLKVYYTFGCPNCGGPIDDEHLLAGVPCSKCLPGRVEN. 4 residues coordinate Zn(2+): C10, C13, C28, and C31. Residues Q86 and 103–110 each bind ATP; that span reads APTGLGKT. Residues 90–277 form the Helicase ATP-binding domain; sequence IKRLAKSESF…ALRTLIGFEP (188 aa). The DEAD box motif lies at 184 to 187; it reads DDSD. Positions 570–1156 are topoisomerase I; that stretch reads INIKTILLIV…VNSLKLDTNV (587 aa). Residues 574 to 736 form the Toprim domain; that stretch reads TILLIVESPT…NIYRIKYHEI (163 aa). E580 serves as a coordination point for Mg(2+). An RG C-terminal-type zinc finger spans residues 655–682; the sequence is IYKCYNCGKTFTIKSNTCPYCGSVFISS. Zn(2+) contacts are provided by C658, C661, C672, and C675. A Mg(2+)-binding site is contributed by D705. A Topo IA-type catalytic domain is found at 752–1143; the sequence is NMNLVKSQIV…DLHKEITQIS (392 aa). Residue Y895 is the O-(5'-phospho-DNA)-tyrosine intermediate of the active site.

It in the N-terminal section; belongs to the DEAD box helicase family. DDVD subfamily. The protein in the C-terminal section; belongs to the type IA topoisomerase family. As to quaternary structure, monomer. Zn(2+) is required as a cofactor. The cofactor is Mg(2+).

Its subcellular location is the cytoplasm. It carries out the reaction ATP + H2O = ADP + phosphate + H(+). Functionally, modifies the topological state of DNA by introducing positive supercoils in an ATP-dependent process, increasing the linking number in steps of +1. Binds to single-stranded DNA, transiently cleaves and then rejoins the ends, introducing a positive supercoil in the process. The scissile phosphodiester is attacked by the catalytic tyrosine of the enzyme, resulting in the formation of a DNA-(5'-phosphotyrosyl)-enzyme intermediate. Probably involved in rewinding DNA strands in regions of the chromosome that have opened up to allow replication, transcription, DNA repair and/or for DNA protection. This is Reverse gyrase 1 from Sulfurisphaera tokodaii (strain DSM 16993 / JCM 10545 / NBRC 100140 / 7) (Sulfolobus tokodaii).